Consider the following 176-residue polypeptide: Transmembrane protein 238 (176 aa).

Residues 1-22 are disordered; it reads MAAAPAVCASQGSPPGAPSAPA. At 1-36 the chain is on the cytoplasmic side; that stretch reads MAAAPAVCASQGSPPGAPSAPAAAPAPAAGLGRCRM. Positions 9–22 are enriched in low complexity; it reads ASQGSPPGAPSAPA. A helical membrane pass occupies residues 37 to 57; that stretch reads ALLLAVALDVAGMAALLTGVF. Over 58-69 the chain is Extracellular; sequence AQLQVRGRDFGD. The helical transmembrane segment at 70-90 threads the bilayer; that stretch reads LLIYSGALLVFLSLLGWILWY. The Cytoplasmic segment spans residues 91-176; that stretch reads TGNIEISRQE…GPGAAGAGSE (86 aa). Residues 124–137 show a composition bias toward low complexity; that stretch reads SAPAAAGQRPAPGS. Residues 124–157 form a disordered region; the sequence is SAPAAAGQRPAPGSRRARRAARAPPPPAAGSRRV. At Ser175 the chain carries Phosphoserine.

It localises to the membrane. In Homo sapiens (Human), this protein is Transmembrane protein 238 (TMEM238).